The following is a 737-amino-acid chain: Disintegrin and metalloproteinase domain-containing protein 2 (737 aa).

The first 18 residues, 1–18, serve as a signal peptide directing secretion; the sequence is MWLLLLLLSGLSRLGGLS. The propeptide occupies 19-180; sequence EPQTEGTREK…YKIRSIKPQR (162 aa). The Extracellular segment spans residues 19–688; it reads EPQTEGTREK…ASAYRSKSAR (670 aa). N-linked (GlcNAc...) asparagine glycosylation is found at N128 and N226. In terms of domain architecture, Peptidase M12B spans 184 to 381; sequence HYLEIHIVVE…QSSHCLQNQP (198 aa). 4 disulfide bridges follow: C293/C376, C335/C360, C337/C342, and C450/C470. N359, N464, N491, and N571 each carry an N-linked (GlcNAc...) asparagine glycan. The Disintegrin domain occupies 389 to 478; it reads MAVCGNGELE…VCEEDFFVQD (90 aa). Residues 617–650 form the EGF-like domain; that stretch reads LNYDCTPEKCNHHGVCNNKKHCHCEPTYLPPDCK. Disulfide bonds link C621-C632, C626-C638, and C640-C649. Residues 689–709 form a helical membrane-spanning segment; it reads WPFFLIIPFYVVILVLIGMLV. Residues 710–737 are Cytoplasmic-facing; sequence KVYSQRKKWRMDDFSSEEQFESESESKD. Phosphoserine is present on S731.

As to quaternary structure, heterodimer with ADAM1/fertilin subunit alpha. The prodomain and the metalloprotease domain are cleaved during the epididymal maturation of the spermatozoa.

The protein resides in the membrane. Its function is as follows. Sperm surface membrane protein that may be involved in sperm-egg plasma membrane adhesion and fusion during fertilization. Could have a direct role in sperm-zona binding or migration of sperm from the uterus into the oviduct. Interactions with egg membrane could be mediated via binding between its disintegrin-like domain to one or more integrins receptors on the egg. This is a non catalytic metalloprotease-like protein. In Rattus norvegicus (Rat), this protein is Disintegrin and metalloproteinase domain-containing protein 2 (Adam2).